We begin with the raw amino-acid sequence, 543 residues long: Chaperonin GroEL 1 (543 aa).

Residues 30 to 33 (TLGP), Lys-51, 87 to 91 (DGTTT), Gly-415, and Asp-496 each bind ATP.

Belongs to the chaperonin (HSP60) family. In terms of assembly, forms a cylinder of 14 subunits composed of two heptameric rings stacked back-to-back. Interacts with the co-chaperonin GroES.

It localises to the cytoplasm. It catalyses the reaction ATP + H2O + a folded polypeptide = ADP + phosphate + an unfolded polypeptide.. In terms of biological role, together with its co-chaperonin GroES, plays an essential role in assisting protein folding. The GroEL-GroES system forms a nano-cage that allows encapsulation of the non-native substrate proteins and provides a physical environment optimized to promote and accelerate protein folding. The chain is Chaperonin GroEL 1 from Mesorhizobium japonicum (strain LMG 29417 / CECT 9101 / MAFF 303099) (Mesorhizobium loti (strain MAFF 303099)).